We begin with the raw amino-acid sequence, 403 residues long: S-adenosylmethionine sensor upstream of mTORC1 (403 aa).

The span at 1–10 (MEPGPGGRGA) shows a compositional bias: gly residues. A disordered region spans residues 1–32 (MEPGPGGRGAARGQRPPNAAQPREQERKLEQE). Residues 11–22 (ARGQRPPNAAQP) are compositionally biased toward low complexity. Residues 23–32 (REQERKLEQE) show a composition bias toward basic and acidic residues. 6 residues coordinate S-adenosyl-L-methionine: arginine 93, glycine 170, aspartate 188, aspartate 200, phenylalanine 201, and serine 242.

The protein belongs to the BMT2/SAMTOR family. In terms of assembly, interacts with the GATOR1 complex; interaction is disrupted when SAMTOR binds S-adenosyl-L-methionine. Interacts with the KICSTOR complex; interaction is disrupted when SAMTOR binds S-adenosyl-L-methionine.

S-adenosyl-L-methionine-binding protein that acts as an inhibitor of mTORC1 signaling via interaction with the GATOR1 and KICSTOR complexes. Acts as a sensor of S-adenosyl-L-methionine to signal methionine sufficiency to mTORC1: in presence of methionine, binds S-adenosyl-L-methionine, leading to disrupt interaction with the GATOR1 and KICSTOR complexes and promote mTORC1 signaling. Upon methionine starvation, S-adenosyl-L-methionine levels are reduced, thereby promoting the association with GATOR1 and KICSTOR, leading to inhibit mTORC1 signaling. Probably also acts as a S-adenosyl-L-methionine-dependent methyltransferase. The sequence is that of S-adenosylmethionine sensor upstream of mTORC1 from Mus musculus (Mouse).